Reading from the N-terminus, the 95-residue chain is Integration host factor subunit beta (95 aa).

It belongs to the bacterial histone-like protein family. In terms of assembly, heterodimer of an alpha and a beta chain.

In terms of biological role, this protein is one of the two subunits of integration host factor, a specific DNA-binding protein that functions in genetic recombination as well as in transcriptional and translational control. The polypeptide is Integration host factor subunit beta (Shewanella amazonensis (strain ATCC BAA-1098 / SB2B)).